A 216-amino-acid polypeptide reads, in one-letter code: Large ribosomal subunit protein uL1 (216 aa).

This sequence belongs to the universal ribosomal protein uL1 family. As to quaternary structure, part of the 50S ribosomal subunit.

Binds directly to 23S rRNA. Probably involved in E site tRNA release. In terms of biological role, protein L1 is also a translational repressor protein, it controls the translation of its operon by binding to its mRNA. The polypeptide is Large ribosomal subunit protein uL1 (Thermococcus kodakarensis (strain ATCC BAA-918 / JCM 12380 / KOD1) (Pyrococcus kodakaraensis (strain KOD1))).